The sequence spans 531 residues: Arginine--tRNA ligase (531 aa).

Positions 113-123 (ANPTGPLHIGH) match the 'HIGH' region motif.

Belongs to the class-I aminoacyl-tRNA synthetase family. In terms of assembly, monomer.

It localises to the cytoplasm. The catalysed reaction is tRNA(Arg) + L-arginine + ATP = L-arginyl-tRNA(Arg) + AMP + diphosphate. This chain is Arginine--tRNA ligase, found in Campylobacter fetus subsp. fetus (strain 82-40).